Reading from the N-terminus, the 1709-residue chain is Intraflagellar transport protein 122 (1709 aa).

WD repeat units follow at residues 51 to 89 and 132 to 171; these read TQHP…ALFK and SFKG…LNSC. A disordered region spans residues 209–229; the sequence is TIPQTVTPSASASGRSGSGKR. The stretch at 634–673 is one WD 3 repeat; it reads LHRSPIVSLDISPDRKYISVVDRSDVVSVYKFLDDSEIVL. An LRR 1 repeat occupies 1231–1256; sequence IEALERLRLSGNTSKEAIIIKQLIDA. The segment at 1378 to 1404 is disordered; that stretch reads LSGEDTVKASSQRSKKDNPPSLRSTIG. An LRR 2 repeat occupies 1414–1436; the sequence is LGSLAHIDLGINNMNIPPGISEL.

It is found in the cell projection. Its subcellular location is the cilium. The protein localises to the flagellum. It localises to the cytoplasm. The protein resides in the cytoskeleton. It is found in the flagellum axoneme. Its subcellular location is the flagellum basal body. In terms of biological role, component of the intraflagellar transport complex A (IFT-A) involved in flagellar assembly. This Giardia intestinalis (strain ATCC 50803 / WB clone C6) (Giardia lamblia) protein is Intraflagellar transport protein 122.